Here is a 311-residue protein sequence, read N- to C-terminus: Putative ankyrin repeat protein RF_0923 (311 aa).

5 ANK repeats span residues 42–71 (IDNT…EQAI), 77–106 (NGNT…PQAI), 112–141 (NGNT…PQAI), 147–176 (NGNT…EQAI), and 182–213 (KGCT…AINH).

In Rickettsia felis (strain ATCC VR-1525 / URRWXCal2) (Rickettsia azadi), this protein is Putative ankyrin repeat protein RF_0923.